Reading from the N-terminus, the 68-residue chain is Large ribosomal subunit protein uL29 (68 aa).

This sequence belongs to the universal ribosomal protein uL29 family.

The polypeptide is Large ribosomal subunit protein uL29 (rpl29) (Archaeoglobus fulgidus (strain ATCC 49558 / DSM 4304 / JCM 9628 / NBRC 100126 / VC-16)).